Reading from the N-terminus, the 579-residue chain is Glutamine--tRNA ligase (579 aa).

A 'HIGH' region motif is present at residues 41 to 51 (PEPNGYLHIGH). ATP is bound by residues 42 to 44 (EPN) and 48 to 54 (HIGHAKA). Aspartate 74 and tyrosine 218 together coordinate L-glutamine. Residues threonine 237, 285 to 286 (RL), and 293 to 295 (MSK) each bind ATP. A 'KMSKS' region motif is present at residues 292-296 (VMSKR).

This sequence belongs to the class-I aminoacyl-tRNA synthetase family. As to quaternary structure, monomer.

The protein resides in the cytoplasm. It carries out the reaction tRNA(Gln) + L-glutamine + ATP = L-glutaminyl-tRNA(Gln) + AMP + diphosphate. The sequence is that of Glutamine--tRNA ligase from Xanthomonas campestris pv. campestris (strain 8004).